A 206-amino-acid chain; its full sequence is MIRYPNGKTFQPKHSVSSQNSQKRAPSYSNRGMTLEDDLNETNKYYLTNQIAVIHKKPTPVQIVNVHYPKRSAAVIKEAYFKQSSTTDYNGIYKGRYIDFEAKETKNKTSFPLQNFHDHQIEHMKQVKAQDGICFVIISAFDQVYFLEADKLFYFWDRKEKNGRKSIRKDELEETAYPISLGYAPRIDYISIIEQLYFSPSSGAKG.

The disordered stretch occupies residues 1–34 (MIRYPNGKTFQPKHSVSSQNSQKRAPSYSNRGMT). Polar residues predominate over residues 8–32 (KTFQPKHSVSSQNSQKRAPSYSNRG). Mg(2+)-binding residues include T86, D88, E101, and Q120.

This sequence belongs to the RecU family. As to quaternary structure, homodimer. Interacts with RuvB. Mg(2+) is required as a cofactor.

It is found in the cytoplasm. The catalysed reaction is Endonucleolytic cleavage at a junction such as a reciprocal single-stranded crossover between two homologous DNA duplexes (Holliday junction).. In terms of biological role, has at least 2 separable functions; Holliday junction resolution with generation of monomeric chromosomes, and negative modulation of RecA activity. Endonuclease that resolves Holliday junction intermediates in genetic recombination. Cleaves mobile four-strand junctions by introducing symmetrical nicks in paired strands. Promotes annealing of linear ssDNA with homologous dsDNA. Required for DNA repair, homologous recombination and chromosome segregation. Partially inhibits the hydrolysis of dATP or rATP by RecA. Holliday junction resolution is stimulated by RuvB. The polypeptide is Holliday junction resolvase RecU (recU) (Bacillus subtilis (strain 168)).